The sequence spans 37 residues: Cytochrome b6-f complex subunit 5 (37 aa).

Residues F5 to A25 traverse the membrane as a helical segment.

The protein belongs to the PetG family. As to quaternary structure, the 4 large subunits of the cytochrome b6-f complex are cytochrome b6, subunit IV (17 kDa polypeptide, PetD), cytochrome f and the Rieske protein, while the 4 small subunits are PetG, PetL, PetM and PetN. The complex functions as a dimer.

It localises to the plastid. The protein resides in the chloroplast thylakoid membrane. Its function is as follows. Component of the cytochrome b6-f complex, which mediates electron transfer between photosystem II (PSII) and photosystem I (PSI), cyclic electron flow around PSI, and state transitions. PetG is required for either the stability or assembly of the cytochrome b6-f complex. The protein is Cytochrome b6-f complex subunit 5 of Solanum lycopersicum (Tomato).